The chain runs to 136 residues: Ribulose bisphosphate carboxylase small subunit, chloroplastic 1 (136 aa).

A chloroplast-targeting transit peptide spans 1–13; it reads NTDITSNGERVKC.

Belongs to the RuBisCO small chain family. As to quaternary structure, heterohexadecamer of 8 large and 8 small subunits.

The protein resides in the plastid. It is found in the chloroplast. Functionally, ruBisCO catalyzes two reactions: the carboxylation of D-ribulose 1,5-bisphosphate, the primary event in carbon dioxide fixation, as well as the oxidative fragmentation of the pentose substrate. Both reactions occur simultaneously and in competition at the same active site. Although the small subunit is not catalytic it is essential for maximal activity. This is Ribulose bisphosphate carboxylase small subunit, chloroplastic 1 from Pisum sativum (Garden pea).